Here is a 755-residue protein sequence, read N- to C-terminus: E3 ubiquitin-protein ligase TRIM56 (755 aa).

The RING-type zinc-finger motif lies at Cys-21–Arg-60. B box-type zinc fingers lie at residues Lys-98–Leu-149 and Arg-164–Leu-205. Residues Cys-169, His-172, Cys-192, and His-197 each coordinate Zn(2+). The stretch at Leu-216–Ser-314 forms a coiled coil. Positions Glu-371–Gly-484 are disordered. The span at Ser-392 to Arg-404 shows a compositional bias: basic and acidic residues. A phosphothreonine mark is found at Thr-418 and Thr-442. Residues Pro-419 to Gly-447 show a composition bias toward basic and acidic residues. The span at Arg-453–Ser-469 shows a compositional bias: basic residues. Phosphoserine is present on Ser-475.

It belongs to the TRIM/RBCC family. As to quaternary structure, homooligomer. Interacts with STING1. Interacts with TICAM1. In terms of processing, (Microbial infection) Preferentially ubiquitinated with 'Lys-48' and 'Lys-11'-linked ubiquitin chains by Salmonella effector SopA leading to proteasomal targeting and degradation. Post-translationally, autoubiquitinated. As to expression, widely expressed (at protein level).

It is found in the cytoplasm. The catalysed reaction is S-ubiquitinyl-[E2 ubiquitin-conjugating enzyme]-L-cysteine + [acceptor protein]-L-lysine = [E2 ubiquitin-conjugating enzyme]-L-cysteine + N(6)-ubiquitinyl-[acceptor protein]-L-lysine.. It functions in the pathway protein modification; protein ubiquitination. Its function is as follows. E3 ubiquitin-protein ligase that plays a key role in innate antiviral immunity by mediating ubiquitination of CGAS and STING1. In response to pathogen- and host-derived double-stranded DNA (dsDNA), targets STING1 to 'Lys-63'-linked ubiquitination, thereby promoting its homodimerization, a step required for the production of type I interferon IFN-beta. Also mediate monoubiquitination of CGAS, thereby promoting CGAS oligomerization and subsequent activation. Promotes also TNFalpha-induced NF-kappa-B signaling by mediating 'Lys-63'-linked ubiquitination TAK1, leading to enhanced interaction between TAK1 and CHUK/IKKalpha. Independently of its E3 ubiquitin ligase activity, positive regulator of TLR3 signaling. Potentiates extracellular double stranded RNA (dsRNA)-induced expression of IFNB1 and interferon-stimulated genes ISG15, IFIT1/ISG56, CXCL10, OASL and CCL5/RANTES. Promotes establishment of an antiviral state by TLR3 ligand and TLR3-mediated chemokine induction following infection by hepatitis C virus. Acts as a restriction factor of Zika virus through direct interaction with the viral RNA via its C-terminal region. The chain is E3 ubiquitin-protein ligase TRIM56 from Homo sapiens (Human).